A 240-amino-acid chain; its full sequence is Protein unc-119 homolog A (240 aa).

Residues 1-12 show a composition bias toward gly residues; it reads MKVKKGGGGAGT. The disordered stretch occupies residues 1–61; the sequence is MKVKKGGGGA…GPLQRKQRIG (61 aa). Low complexity predominate over residues 13 to 23; it reads GAEPASGAPGP. Phosphoserine; by CK2 occurs at positions 37, 39, and 41. Tyrosine 131 is a binding site for tetradecanoate.

The protein belongs to the PDE6D/unc-119 family. In terms of assembly, interacts with CABP4; in the absence of calcium. May interact with GTP-bound ARL1. Interacts with ARL2 and ARL3 (GTP-bound forms); this promotes the release of myristoylated cargo proteins. Found in a complex with ARL3, RP2 and UNC119; RP2 induces hydrolysis of GTP ARL3 in the complex, leading to the release of UNC119. Interacts with NPHP3 (when myristoylated). Interacts with CYS1 (when myristoylated). Interacts with MACIR; interaction only takes place when UNC119 is not liganded with myristoylated proteins. Interacts with LCK; this interaction plays a crucial role in activation of LCK. Interacts with FYN. Interacts with RAB11A; in a cell cycle-dependent manner. Interacts with LYN (via SH2 and SH3 domains); leading to LYN activation. Interacts with DNM1; leading to a decrease of DNM1 GTPase activity. Found in a complex with ABL1, ABL2, CRK and UNC119; leading to the inhibition of CRK phosphorylation by ABL kinases. Interacts with CD44. Interacts with KLHL18 (via kelch repeats). Interacts with PPP3CA, PPP3CB and PPP3CC. Interacts with USP48; this interaction promotes UNC119 stability. Phosphorylation suppresses its interaction with KLHL18 and down-regulates its KLHL18-mediated degradation. Phosphorylated more under light conditions than dark conditions. Dephosphorylated by calcineurin.

It localises to the cytoplasm. The protein resides in the cytoskeleton. It is found in the microtubule organizing center. The protein localises to the centrosome. Its subcellular location is the spindle. It localises to the spindle pole. Its function is as follows. Involved in synaptic functions in photoreceptor cells, the signal transduction in immune cells as a Src family kinase activator, endosome recycling, the uptake of bacteria and endocytosis, protein trafficking in sensory neurons and as lipid-binding chaperone with specificity for a diverse subset of myristoylated proteins. Specifically binds the myristoyl moiety of a subset of N-terminally myristoylated proteins and is required for their localization. Binds myristoylated GNAT1 and is required for G-protein localization and trafficking in sensory neurons. Probably plays a role in trafficking proteins in photoreceptor cells. Plays important roles in mediating Src family kinase signals for the completion of cytokinesis via RAB11A. This Canis lupus familiaris (Dog) protein is Protein unc-119 homolog A (UNC119).